The sequence spans 601 residues: Nuclear envelope protein ndc1 (601 aa).

At 1-34 (MVMLRTSFPSGSRTKAVRYHTLLRPILQQRFLRA) the chain is on the cytoplasmic side. A helical transmembrane segment spans residues 35-55 (CFALLCLCCITSYWFSSGPFI). Residues 56-58 (SLS) are Perinuclear space-facing. Residues 59-79 (FWFLSLVRGFVCFFFMFPYFV) form a helical membrane-spanning segment. Topologically, residues 80 to 106 (MLKSRMSTQKVTKQSLGAQLFYDFSPK) are cytoplasmic. A helical membrane pass occupies residues 107–127 (SFFLVYLTFAVSVSCLCLFYI). Topologically, residues 128–153 (KGHASSIRLQWIASPNAYELPSLNER) are perinuclear space. The chain crosses the membrane as a helical span at residues 154 to 174 (FVYMTYFSHILILALTVEHLY). Over 175–182 (LQRDSPSR) the chain is Cytoplasmic. Residues 183 to 203 (PVINVSFFNYIFQNLGWLIRF) form a helical membrane-spanning segment. At 204–256 (SFRKSIICCLFTPFSYAILRSYIWRFAALLTSCCRRIAYTKTPPKWPLSLRLL) the chain is on the perinuclear space side. The helical transmembrane segment at 257-277 (LHSFWMAFIVCLTFQIALLIF) threads the bilayer. At 278–601 (RVFLYSGPMI…VLFREYKSNS (324 aa)) the chain is on the cytoplasmic side.

This sequence belongs to the NDC1 family. In terms of assembly, component of the nuclear pore complex (NPC). NPC constitutes the exclusive means of nucleocytoplasmic transport. NPCs allow the passive diffusion of ions and small molecules and the active, nuclear transport receptor-mediated bidirectional transport of macromolecules such as proteins, RNAs, ribonucleoparticles (RNPs), and ribosomal subunits across the nuclear envelope. Due to its 8-fold rotational symmetry, all subunits are present with 8 copies or multiples thereof.

It is found in the nucleus. The protein resides in the nuclear pore complex. The protein localises to the nucleus membrane. It localises to the cytoplasm. Its subcellular location is the cytoskeleton. It is found in the microtubule organizing center. The protein resides in the spindle pole body. Its function is as follows. Component of the nuclear pore complex (NPC) and the spindle pole body (SPB), which plays a key role in de novo assembly and insertion of both structures in the nuclear envelope. Involved in the formation of the bipolar mitotic spindle. Anchors the spindle pole body in the nuclear envelope. The chain is Nuclear envelope protein ndc1 (cut11) from Schizosaccharomyces pombe (strain 972 / ATCC 24843) (Fission yeast).